Here is a 343-residue protein sequence, read N- to C-terminus: Cyclic AMP-AMP-AMP synthase (343 aa).

Belongs to the CD-NTase family. D01 subfamily. The cofactor is Mg(2+).

It carries out the reaction 3 ATP = 2',3',3'-c-tri-AMP + 3 diphosphate. Its function is as follows. Cyclic nucleotide synthase (second messenger synthase) of a CBASS antivirus system. CBASS (cyclic oligonucleotide-based antiphage signaling system) provides immunity against bacteriophage. The CD-NTase protein synthesizes cyclic nucleotides in response to infection; these serve as specific second messenger signals. The signals activate a diverse range of effectors, leading to bacterial cell death and thus abortive phage infection. A type II-C(AAAA) CBASS system. Cyclic trinucleotide synthase that catalyzes the synthesis of 2',3',3'-cyclic AMP-AMP-AMP (2',3',3'-c-tri-AMP or 2'3'3'-cAAA) as the major product, as well as another cyclic AMP(4) 2'-5'-linked minor product that acts as a second messenger for cell signal transduction. The chain is Cyclic AMP-AMP-AMP synthase from Acinetobacter sp. (strain ATCC 27244 / 9458).